Consider the following 153-residue polypeptide: UPF0756 membrane protein BA_4840/GBAA_4840/BAS4489 (153 aa).

Helical transmembrane passes span 8–28 (FLFI…TVAI), 54–74 (LGVT…EIGF), 87–107 (WIAL…VQLL), and 117–137 (LVFG…GPLI).

This sequence belongs to the UPF0756 family.

Its subcellular location is the cell membrane. This is UPF0756 membrane protein BA_4840/GBAA_4840/BAS4489 from Bacillus anthracis.